The chain runs to 254 residues: Coenzyme F420:L-glutamate ligase (254 aa).

GTP is bound by residues isoleucine 11 to isoleucine 14, serine 40 to threonine 41, and lysine 45. An a divalent metal cation-binding site is contributed by aspartate 109. Residue asparagine 112 participates in GTP binding. A divalent metal cation-binding residues include aspartate 150, threonine 151, and glutamate 208. Methionine 206–isoleucine 213 lines the GTP pocket.

The protein belongs to the CofE family. As to quaternary structure, homodimer. Mg(2+) serves as cofactor. The cofactor is Mn(2+). It depends on K(+) as a cofactor.

The enzyme catalyses oxidized coenzyme F420-0 + GTP + L-glutamate = oxidized coenzyme F420-1 + GDP + phosphate + H(+). It carries out the reaction oxidized coenzyme F420-1 + GTP + L-glutamate = oxidized coenzyme F420-2 + GDP + phosphate + H(+). It participates in cofactor biosynthesis; coenzyme F420 biosynthesis. Functionally, catalyzes the GTP-dependent successive addition of two or more gamma-linked L-glutamates to the L-lactyl phosphodiester of 7,8-didemethyl-8-hydroxy-5-deazariboflavin (F420-0) to form coenzyme F420-0-glutamyl-glutamate (F420-2) or polyglutamated F420 derivatives. In Methanosarcina acetivorans (strain ATCC 35395 / DSM 2834 / JCM 12185 / C2A), this protein is Coenzyme F420:L-glutamate ligase.